Here is a 64-residue protein sequence, read N- to C-terminus: Large ribosomal subunit protein bL33 (64 aa).

This sequence belongs to the bacterial ribosomal protein bL33 family.

This is Large ribosomal subunit protein bL33 from Synechococcus sp. (strain WH7803).